A 166-amino-acid polypeptide reads, in one-letter code: C-signal (166 aa).

In terms of processing, the mature C-signal (p17) is derived from the precursor sequence (p25) by proteolytic cleavage. The subtilisin-like protease PopC is directly responsible for cleavage of p25 to p17. The cleavage site is probably located between amino acid residues 60 and 68 in p25.

Its subcellular location is the secreted. It localises to the cell outer membrane. Its activity is regulated as follows. Synthesized as a precursor protein (p25), which is cleaved after secretion to generate the mature active C-signal (p17). The p25 precursor purified from M.xanthus cells does not display C-signal activity. Cell-cell signaling protein required for fruiting body formation, a multicellular developmental program that is induced in response to starvation. Necessary for rippling, cellular aggregation, spore differentiation and for gene expression that is initiated after 6 hours of starvation. In starving cells, the C-signal directly induces aggregation and sporulation, which are induced at distinct threshold levels of C-signaling. Contact with C-signaling induces cells to glide with high speed and low stop and reversal frequencies toward aggregation centers. The C-signal acts as a morphogen and induces distinct events at distinct threshold levels. A regulated increase in the level of C-signaling during development ensures the correct temporal order of aggregation and sporulation. This Myxococcus xanthus protein is C-signal.